The primary structure comprises 79 residues: Apolipoprotein C-II (79 aa).

An N-terminal signal peptide occupies residues 1-21 (MDLKVVAVSFLLLVLCSEAAG). Residues 45–52 (GVEKLRDI) form a lipid binding region. The tract at residues 56–79 (SVDAVGTYTSILTDQLYHWWCGEQ) is lipoprotein lipase cofactor.

The protein belongs to the apolipoprotein C2 family. In terms of processing, proapolipoprotein C-II is synthesized as a sialic acid containing glycoprotein which is subsequently desialylated prior to its proteolytic processing. Post-translationally, proapolipoprotein C-II, the major form found in plasma undergoes proteolytic cleavage of its N-terminal hexapeptide to generate apolipoprotein C-II, which occurs as the minor form in plasma.

Its subcellular location is the secreted. Its function is as follows. Component of chylomicrons, very low-density lipoproteins (VLDL), low-density lipoproteins (LDL), and high-density lipoproteins (HDL) in plasma. Plays an important role in lipoprotein metabolism as an activator of lipoprotein lipase. Both proapolipoprotein C-II and apolipoprotein C-II can activate lipoprotein lipase. The chain is Apolipoprotein C-II (APOC2) from Alligator mississippiensis (American alligator).